Here is a 147-residue protein sequence, read N- to C-terminus: Hemoglobin subunit beta (147 aa).

N-acetylserine is present on Ser-2. In terms of domain architecture, Globin spans 3–147; that stretch reads FLSAEEKNLV…VASALAHRYH (145 aa). Ser-45 bears the Phosphoserine mark. Lys-60 is subject to N6-acetyllysine. His-64 contacts heme b. Lys-83 is subject to N6-acetyllysine. His-93 serves as a coordination point for heme b. Cys-94 is subject to S-nitrosocysteine.

It belongs to the globin family. As to quaternary structure, heterotetramer of two alpha chains and two beta chains. Red blood cells.

Its function is as follows. Involved in oxygen transport from the lung to the various peripheral tissues. The polypeptide is Hemoglobin subunit beta (HBB) (Panthera pardus orientalis (Amur leopard)).